The primary structure comprises 116 residues: Large ribosomal subunit protein uL18 (116 aa).

The protein belongs to the universal ribosomal protein uL18 family. As to quaternary structure, part of the 50S ribosomal subunit; part of the 5S rRNA/L5/L18/L25 subcomplex. Contacts the 5S and 23S rRNAs.

In terms of biological role, this is one of the proteins that bind and probably mediate the attachment of the 5S RNA into the large ribosomal subunit, where it forms part of the central protuberance. The polypeptide is Large ribosomal subunit protein uL18 (Pseudomonas syringae pv. tomato (strain ATCC BAA-871 / DC3000)).